The sequence spans 480 residues: 2-phosphoxylose phosphatase 1 (480 aa).

Residues 1-6 (MLYRNR) are Cytoplasmic-facing. A helical; Signal-anchor for type II membrane protein transmembrane segment spans residues 7–27 (FLVLLALAGLLAFLSLSLQFF). The Lumenal portion of the chain corresponds to 28 to 480 (HLIPVSTTKN…YYDACHGEGA (453 aa)). His97 functions as the Nucleophile in the catalytic mechanism. N-linked (GlcNAc...) asparagine glycosylation is found at Asn194, Asn305, and Asn354. Asp379 functions as the Proton donor in the catalytic mechanism.

Belongs to the histidine acid phosphatase family. Interacts with B3GAT3; the interaction increases the 2-phosphoxylose phosphatase activity of PXYLP1 during completion of linkage region formation in a B3GAT3-mediated manner.

Its subcellular location is the golgi apparatus membrane. It carries out the reaction 3-O-[beta-D-GlcA-(1-&gt;3)-beta-D-Gal-(1-&gt;3)-beta-D-Gal-(1-&gt;4)-beta-D-2-O-P-Xyl]-L-seryl-[protein] + H2O = 3-O-(beta-D-GlcA-(1-&gt;3)-beta-D-Gal-(1-&gt;3)-beta-D-Gal-(1-&gt;4)-beta-D-Xyl)-L-seryl-[protein] + phosphate. Responsible for the 2-O-dephosphorylation of xylose in the glycosaminoglycan-protein linkage region of proteoglycans thereby regulating the amount of mature glycosaminoglycan (GAG) chains. Sulfated glycosaminoglycans (GAGs), including heparan sulfate and chondroitin sulfate, are synthesized on the so-called common GAG-protein linkage region (GlcUAbeta1-3Galbeta1-3Galbeta1-4Xylbeta1-O-Ser) of core proteins, which is formed by the stepwise addition of monosaccharide residues by the respective specific glycosyltransferases. Xylose 2-O-dephosphorylation during completion of linkage region formation is a prerequisite for the initiation and efficient elongation of the repeating disaccharide region of GAG chains. The chain is 2-phosphoxylose phosphatase 1 from Rattus norvegicus (Rat).